Reading from the N-terminus, the 64-residue chain is Large ribosomal subunit protein bL28c (64 aa).

It belongs to the bacterial ribosomal protein bL28 family.

Its subcellular location is the plastid. It localises to the chloroplast. This is Large ribosomal subunit protein bL28c from Gracilaria tenuistipitata var. liui (Red alga).